The chain runs to 329 residues: Ig gamma-2C chain C region (329 aa).

Positions 1-97 (ARTTAPSVYP…ATKSNLIKRI (97 aa)) are CH1. Cysteines 27 and 82 form a disulfide. A hinge region spans residues 98–113 (EPRRPKPRPPTDICSC). Residues 114–222 (DDNLGRPSVF…PIEKTISKPR (109 aa)) form a CH2 region. Disulfide bonds link C143-C203 and C249-C307. The tract at residues 223–329 (GKARTPQVYT…QKNLSRSPGK (107 aa)) is CH3.

This chain is Ig gamma-2C chain C region, found in Rattus norvegicus (Rat).